Consider the following 325-residue polypeptide: UPF0285 protein MmarC5_0962 (325 aa).

This sequence belongs to the UPF0285 family.

This chain is UPF0285 protein MmarC5_0962, found in Methanococcus maripaludis (strain C5 / ATCC BAA-1333).